The following is a 156-amino-acid chain: Cytochrome c-type biogenesis protein CcmE (156 aa).

At Met-1 to Arg-8 the chain is on the cytoplasmic side. The helical; Signal-anchor for type II membrane protein transmembrane segment at Leu-9 to Ala-29 threads the bilayer. The Periplasmic segment spans residues Leu-30 to Lys-156. Positions 124 and 128 each coordinate heme.

The protein belongs to the CcmE/CycJ family.

The protein localises to the cell inner membrane. In terms of biological role, heme chaperone required for the biogenesis of c-type cytochromes. Transiently binds heme delivered by CcmC and transfers the heme to apo-cytochromes in a process facilitated by CcmF and CcmH. In Pseudomonas fluorescens, this protein is Cytochrome c-type biogenesis protein CcmE.